A 151-amino-acid chain; its full sequence is Cathelicidin-3 (151 aa).

Positions Met-1–Ala-17 are cleaved as a signal peptide. Positions Leu-18–Val-122 are excised as a propeptide. 2 disulfide bridges follow: Cys-75/Cys-86 and Cys-97/Cys-114. Residues Trp-128–Ile-148 traverse the membrane as a helical segment.

Belongs to the cathelicidin family. In terms of tissue distribution, detected in bone marrow, liver and lung.

The protein localises to the secreted. The protein resides in the membrane. Its function is as follows. May bind bacterial lipopolysaccharide (LPS). May have antimicrobial activity and play a role in the innate immune response. This is Cathelicidin-3 (CATHL3) from Gallus gallus (Chicken).